Consider the following 297-residue polypeptide: Undecaprenyl-diphosphatase (297 aa).

7 helical membrane-spanning segments follow: residues 39–59, 85–105, 113–133, 151–171, 190–210, 220–240, and 249–269; these read PGAA…LIYF, ARLA…GLTL, FRSL…LLVV, GILI…RSGT, SFLL…KHLL, ALWV…AWLL, and LVFV…LQTG.

The protein belongs to the UppP family.

The protein resides in the cell inner membrane. It catalyses the reaction di-trans,octa-cis-undecaprenyl diphosphate + H2O = di-trans,octa-cis-undecaprenyl phosphate + phosphate + H(+). Its function is as follows. Catalyzes the dephosphorylation of undecaprenyl diphosphate (UPP). Confers resistance to bacitracin. This is Undecaprenyl-diphosphatase from Myxococcus xanthus (strain DK1622).